The primary structure comprises 529 residues: Cytochrome P450 monooxygenase acuD (529 aa).

A helical transmembrane segment spans residues 8-28; it reads FAVIAASAAAVAGVLFLIYAA. The N-linked (GlcNAc...) asparagine glycan is linked to Asn81. Position 449 (Cys449) interacts with heme.

Belongs to the cytochrome P450 family. Requires heme as cofactor.

The protein resides in the endoplasmic reticulum membrane. The catalysed reaction is 3-hydroxybenzyl alcohol + reduced [NADPH--hemoprotein reductase] + O2 = gentisyl alcohol + oxidized [NADPH--hemoprotein reductase] + H2O + H(+). It participates in secondary metabolite biosynthesis. Functionally, cytochrome P450 monooxygenase; part of the gene cluster that mediates the biosynthesis of aculins. The pathway begins with the synthesis of 6-methylsalicylic acid by the polyketide synthase (PKS) acuA via condensation of acetate and malonate units. The 6-methylsalicylic acid decarboxylase acuB then catalyzes the decarboxylation of 6-methylsalicylic acid to yield m-cresol (also known as 3-methylphenol). These first reactions occur in the cytosol. The intermediate m-cresol is then transported into the endoplasmic reticulum where the cytochrome P450 monooxygenase acuC converts it to m-hydroxybenzyl alcohol, which is further converted to gentisyl alcohol by the cytochrome P450 monooxygenase acuD. Gentisyl alcohol is further oxidized by the oxidoreductase acuE that probably catalyzes hydroxylation of the aromatic ring. The aromatic system might then be opened by oxidation through a Baeyer-Villiger type of oxidation, which could be catalyzed by acuF, with the carboxylic acid at C-1 subsequently reduced to an aldehyde by acuG. Subsequently, a hemiacetal is formed, before the dehydrogenase acuH would reduce the double bond between C-4 and C-6. Finally, keto-enol tautomerism results in formation of aculinic acid, which exists as two diastereomers (both R/S configurations at C-1) by non-enzymatic hemiacetal formation. The carboxypeptidase acuI could be involved in the linking of aculinic acid to an aculene A moiety produced by the aculene biosynthesis cluster and which leads to the production of aculin A. AcuI may also be involved in the attachment of proline to aculinic acid to form epi-aculins A and B. The protein is Cytochrome P450 monooxygenase acuD of Aspergillus aculeatus (strain ATCC 16872 / CBS 172.66 / WB 5094).